We begin with the raw amino-acid sequence, 207 residues long: MPTVALFKQDGNQNGEVQLNEAIFGIEPNNNVVFDAVIMQRASLRQGTHAVKNRSAVRGGGKKPWRQKGTGRARQGSIRSPQWVGGGTVFGPTPRSYSYKLPRKVRRLAIKSVLSQKVADESLVVVDALNFDAPKTKAFAEVLSNLNVNSKVLVVLEDDNTTAALAARNLKNVTVIPAKGLNVLDVINNDKLVITQGALSQVEEVLA.

The disordered stretch occupies residues 49-78 (HAVKNRSAVRGGGKKPWRQKGTGRARQGSI). Positions 60–71 (GGKKPWRQKGTG) are enriched in basic residues.

It belongs to the universal ribosomal protein uL4 family. In terms of assembly, part of the 50S ribosomal subunit.

Its function is as follows. One of the primary rRNA binding proteins, this protein initially binds near the 5'-end of the 23S rRNA. It is important during the early stages of 50S assembly. It makes multiple contacts with different domains of the 23S rRNA in the assembled 50S subunit and ribosome. Functionally, forms part of the polypeptide exit tunnel. The sequence is that of Large ribosomal subunit protein uL4 from Ligilactobacillus salivarius (strain UCC118) (Lactobacillus salivarius).